The primary structure comprises 204 residues: Inner membrane protein BB_0250 (204 aa).

Helical transmembrane passes span 17 to 37 (IAYS…NVPI), 58 to 78 (ILIF…SFYI), 101 to 121 (YYYG…PFGV), 139 to 159 (FIVS…TLSF), and 172 to 192 (IKII…IIYV).

Belongs to the DedA family.

It is found in the cell inner membrane. Functionally, required for proper cell division and envelope integrity. This chain is Inner membrane protein BB_0250, found in Borreliella burgdorferi (strain ATCC 35210 / DSM 4680 / CIP 102532 / B31) (Borrelia burgdorferi).